Reading from the N-terminus, the 832-residue chain is pre-rRNA 2'-O-ribose RNA methyltransferase FTSJ3 (832 aa).

S-adenosyl-L-methionine contacts are provided by Gly56, Trp58, Asp76, Asp92, and Asp117. Lys157 acts as the Proton acceptor in catalysis. 3 disordered regions span residues 332-358 (INLS…ADEM), 485-523 (RLER…LEEK), and 546-631 (DADE…GLVE). Basic and acidic residues-rich tracts occupy residues 345–358 (EEEK…ADEM) and 485–495 (RLERERREQGV). Over residues 503 to 514 (EEEEEEEEEEEN) the composition is skewed to acidic residues. Residues 570–579 (KTKKKGQKKK) show a composition bias toward basic residues. The segment covering 600-618 (AEAEAEQSSDDDSSSDEEG) has biased composition (acidic residues). Residues 726-758 (IKKVAEAKARKKRRMLKKMEQMKKKAEAVVSTV) adopt a coiled-coil conformation. Positions 795–832 (GPRVRRPPGVKGQFKVVDSRLKKDVRAQKRKEQKKRRK) are disordered. Residues 811 to 821 (VDSRLKKDVRA) show a composition bias toward basic and acidic residues. Basic residues predominate over residues 822–832 (QKRKEQKKRRK).

It belongs to the class I-like SAM-binding methyltransferase superfamily. RNA methyltransferase RlmE family. SPB1 subfamily. Interacts with NIP7.

It is found in the nucleus. The protein resides in the nucleolus. The catalysed reaction is a ribonucleotide in rRNA + S-adenosyl-L-methionine = a 2'-O-methylribonucleotide in rRNA + S-adenosyl-L-homocysteine + H(+). RNA 2'-O-methyltransferase involved in the processing of the 34S pre-rRNA to 18S rRNA and in 40S ribosomal subunit formation. This is pre-rRNA 2'-O-ribose RNA methyltransferase FTSJ3 from Gallus gallus (Chicken).